We begin with the raw amino-acid sequence, 173 residues long: Shikimate kinase (173 aa).

Position 14-19 (14-19) interacts with ATP; sequence GAGKST. Residue S18 coordinates Mg(2+). Substrate contacts are provided by D36, R60, and G82. R120 contacts ATP. R140 lines the substrate pocket. Q157 serves as a coordination point for ATP.

It belongs to the shikimate kinase family. As to quaternary structure, monomer. The cofactor is Mg(2+).

Its subcellular location is the cytoplasm. The catalysed reaction is shikimate + ATP = 3-phosphoshikimate + ADP + H(+). It functions in the pathway metabolic intermediate biosynthesis; chorismate biosynthesis; chorismate from D-erythrose 4-phosphate and phosphoenolpyruvate: step 5/7. Catalyzes the specific phosphorylation of the 3-hydroxyl group of shikimic acid using ATP as a cosubstrate. This Baumannia cicadellinicola subsp. Homalodisca coagulata protein is Shikimate kinase.